The chain runs to 442 residues: Putative toxin YopC (442 aa).

The protein in the C-terminal section; belongs to the MbcT/ParT/Res family. As to quaternary structure, forms a complex with cognate antitoxin YopB.

In terms of biological role, may be the toxic component of a type II toxin-antitoxin (TA) system. Neutralized by its cognate antitoxin YopB. This is Putative toxin YopC (yopC) from Bacillus subtilis (strain 168).